The chain runs to 77 residues: EMBRYO SURROUNDING FACTOR 1-like protein 9 (77 aa).

A signal peptide spans 1–22 (MSSSRFLILCIILISFFPLHEC). Cystine bridges form between Cys38-Cys54, Cys43-Cys75, Cys52-Cys71, and Cys55-Cys64.

The protein belongs to the MEG family. Expressed in flowers.

This is EMBRYO SURROUNDING FACTOR 1-like protein 9 (ESFL9) from Arabidopsis thaliana (Mouse-ear cress).